The primary structure comprises 263 residues: MILDMFRLDDKVAVITGGGRGLGAAIALAFAQAGADVLIASRTSSELDAVAEQIRAAGRRAHTVAADLAHPEVTAQLAGQAVGAFGKLDIVVNNVGGTMPNTLLSTSTKDLADAFAFNVGTAHALTVAAVPLMLEHSGGGSVINISSTMGRLAARGFAAYGTAKAALAHYTRLAALDLCPRVRVNAIAPGSILTSALEVVAANDELRAPMEQATPLRRLGDPVDIAAAAVYLASPAGSFLTGKTLEVDGGLTFPNLDLPIPDL.

17–41 (GGGRGLGAAIALAFAQAGADVLIAS) serves as a coordination point for NAD(+). Residue Ser-147 coordinates substrate. Tyr-160 functions as the Proton acceptor in the catalytic mechanism. Position 164 (Lys-164) interacts with NAD(+).

This sequence belongs to the short-chain dehydrogenases/reductases (SDR) family.

This is an uncharacterized protein from Mycobacterium tuberculosis (strain CDC 1551 / Oshkosh).